The chain runs to 880 residues: EP-cadherin (880 aa).

Residues 1 to 28 (MGSTRLRNASVWLCGLLCLLQVVPSINA) form the signal peptide. Residues 29–155 (DVSGCKPGFS…THTGLKRKKR (127 aa)) constitute a propeptide that is removed on maturation. Asn-61 is a glycosylation site (N-linked (GlcNAc...) asparagine). Cadherin domains are found at residues 156–263 (DWVI…RPKF), 264–376 (TQDV…APIF), 377–487 (DPKT…APFF), 488–593 (VPAV…DNGP), and 594–704 (VPSP…GFDL). The Extracellular segment spans residues 156–703 (DWVIPPIKVS…CQEKLVGGFD (548 aa)). O-linked (GalNAc...) threonine glycans are attached at residues Thr-343, Thr-382, and Thr-400. N-linked (GlcNAc...) asparagine glycosylation is present at Asn-425. 5 O-linked (GalNAc...) threonine glycosylation sites follow: Thr-428, Thr-469, Thr-471, Thr-473, and Thr-475. N-linked (GlcNAc...) asparagine glycosylation occurs at Asn-558. Thr-562, Thr-576, Thr-578, and Thr-580 each carry an O-linked (GalNAc...) threonine glycan. Cystine bridges form between Cys-603–Cys-687 and Cys-685–Cys-694. The N-linked (GlcNAc...) asparagine glycan is linked to Asn-681. A helical transmembrane segment spans residues 704–728 (LPIILVILGSVLALLILFLLLLLFL). Over 729-880 (KRKKVVKEPL…DMYGGDDDEE (152 aa)) the chain is Cytoplasmic. The disordered stretch occupies residues 790–826 (PAPHYRPRPSNPDEIGNFIDENLDAADNDPTAPPYDS).

In terms of assembly, interacts with CTNNB1.

The protein localises to the cell membrane. Its function is as follows. Cadherins are calcium-dependent cell adhesion proteins. They preferentially interact with themselves in a homophilic manner in connecting cells; cadherins may thus contribute to the sorting of heterogeneous cell types. The chain is EP-cadherin from Xenopus laevis (African clawed frog).